Here is a 361-residue protein sequence, read N- to C-terminus: Phospho-N-acetylmuramoyl-pentapeptide-transferase (361 aa).

A run of 10 helical transmembrane segments spans residues 25 to 45 (RGIL…PAVI), 73 to 93 (TMGG…WGDL), 98 to 118 (VWLV…DDWI), 139 to 159 (IFGL…AAIT), 168 to 188 (IALP…IVGF), 200 to 220 (GLAI…AYAS), 237 to 257 (AGEL…FLWF), 264 to 284 (VFMG…IAVI), 289 to 309 (MVLV…IIQV), and 339 to 359 (VIVR…ATLK).

This sequence belongs to the glycosyltransferase 4 family. MraY subfamily. Mg(2+) serves as cofactor.

Its subcellular location is the cell inner membrane. It carries out the reaction UDP-N-acetyl-alpha-D-muramoyl-L-alanyl-gamma-D-glutamyl-meso-2,6-diaminopimeloyl-D-alanyl-D-alanine + di-trans,octa-cis-undecaprenyl phosphate = di-trans,octa-cis-undecaprenyl diphospho-N-acetyl-alpha-D-muramoyl-L-alanyl-D-glutamyl-meso-2,6-diaminopimeloyl-D-alanyl-D-alanine + UMP. It functions in the pathway cell wall biogenesis; peptidoglycan biosynthesis. Its function is as follows. Catalyzes the initial step of the lipid cycle reactions in the biosynthesis of the cell wall peptidoglycan: transfers peptidoglycan precursor phospho-MurNAc-pentapeptide from UDP-MurNAc-pentapeptide onto the lipid carrier undecaprenyl phosphate, yielding undecaprenyl-pyrophosphoryl-MurNAc-pentapeptide, known as lipid I. The chain is Phospho-N-acetylmuramoyl-pentapeptide-transferase from Xanthomonas oryzae pv. oryzae (strain PXO99A).